We begin with the raw amino-acid sequence, 134 residues long: Putative nickel-responsive regulator (134 aa).

4 residues coordinate Ni(2+): histidine 78, histidine 89, histidine 91, and cysteine 97.

Belongs to the transcriptional regulatory CopG/NikR family. Requires Ni(2+) as cofactor.

In terms of biological role, transcriptional regulator. The chain is Putative nickel-responsive regulator from Chlorobaculum parvum (strain DSM 263 / NCIMB 8327) (Chlorobium vibrioforme subsp. thiosulfatophilum).